We begin with the raw amino-acid sequence, 377 residues long: Succinyl-diaminopimelate desuccinylase (377 aa).

His-68 is a binding site for Zn(2+). Asp-70 is an active-site residue. Residue Asp-101 coordinates Zn(2+). Glu-135 acts as the Proton acceptor in catalysis. 3 residues coordinate Zn(2+): Glu-136, Glu-164, and His-350.

It belongs to the peptidase M20A family. DapE subfamily. As to quaternary structure, homodimer. It depends on Zn(2+) as a cofactor. Co(2+) serves as cofactor.

It carries out the reaction N-succinyl-(2S,6S)-2,6-diaminopimelate + H2O = (2S,6S)-2,6-diaminopimelate + succinate. Its pathway is amino-acid biosynthesis; L-lysine biosynthesis via DAP pathway; LL-2,6-diaminopimelate from (S)-tetrahydrodipicolinate (succinylase route): step 3/3. Functionally, catalyzes the hydrolysis of N-succinyl-L,L-diaminopimelic acid (SDAP), forming succinate and LL-2,6-diaminopimelate (DAP), an intermediate involved in the bacterial biosynthesis of lysine and meso-diaminopimelic acid, an essential component of bacterial cell walls. This Aliivibrio fischeri (strain MJ11) (Vibrio fischeri) protein is Succinyl-diaminopimelate desuccinylase.